The sequence spans 241 residues: Superoxide dismutase [Mn] 2, mitochondrial (241 aa).

The Mn(2+) site is built by His-60, His-108, Asp-197, and His-201.

Belongs to the iron/manganese superoxide dismutase family. As to quaternary structure, homotetramer. Requires Mn(2+) as cofactor.

The protein resides in the mitochondrion matrix. It carries out the reaction 2 superoxide + 2 H(+) = H2O2 + O2. In terms of biological role, destroys superoxide anion radicals which are normally produced within the cells and which are toxic to biological systems. The protein is Superoxide dismutase [Mn] 2, mitochondrial (MSD2) of Arabidopsis thaliana (Mouse-ear cress).